The sequence spans 120 residues: MIF-like protein mif-2 (120 aa).

This sequence belongs to the MIF family.

In Caenorhabditis elegans, this protein is MIF-like protein mif-2 (mif-2).